The chain runs to 396 residues: Elongation factor Tu (396 aa).

One can recognise a tr-type G domain in the interval 10–206 (KPHVNVGTIG…ALDTYIPEPE (197 aa)). Residues 19–26 (GHVDHGKT) are G1. 19 to 26 (GHVDHGKT) is a GTP binding site. Thr-26 contacts Mg(2+). Residues 60 to 64 (GITIN) form a G2 region. The interval 81–84 (DCPG) is G3. GTP contacts are provided by residues 81–85 (DCPGH) and 136–139 (NKAD). The segment at 136-139 (NKAD) is G4. Residues 174-176 (SAL) form a G5 region.

The protein belongs to the TRAFAC class translation factor GTPase superfamily. Classic translation factor GTPase family. EF-Tu/EF-1A subfamily. As to quaternary structure, monomer.

It is found in the cytoplasm. It carries out the reaction GTP + H2O = GDP + phosphate + H(+). Functionally, GTP hydrolase that promotes the GTP-dependent binding of aminoacyl-tRNA to the A-site of ribosomes during protein biosynthesis. The chain is Elongation factor Tu from Thiobacillus denitrificans (strain ATCC 25259 / T1).